The following is a 181-amino-acid chain: UPF0228 protein MA_3117 (181 aa).

It belongs to the UPF0228 family.

The chain is UPF0228 protein MA_3117 from Methanosarcina acetivorans (strain ATCC 35395 / DSM 2834 / JCM 12185 / C2A).